A 195-amino-acid polypeptide reads, in one-letter code: Imidazoleglycerol-phosphate dehydratase (195 aa).

It belongs to the imidazoleglycerol-phosphate dehydratase family.

Its subcellular location is the cytoplasm. The enzyme catalyses D-erythro-1-(imidazol-4-yl)glycerol 3-phosphate = 3-(imidazol-4-yl)-2-oxopropyl phosphate + H2O. It participates in amino-acid biosynthesis; L-histidine biosynthesis; L-histidine from 5-phospho-alpha-D-ribose 1-diphosphate: step 6/9. This Deinococcus deserti (strain DSM 17065 / CIP 109153 / LMG 22923 / VCD115) protein is Imidazoleglycerol-phosphate dehydratase.